Consider the following 571-residue polypeptide: PHD and RING finger domain-containing protein C126.07c (571 aa).

The RING-type 1; atypical zinc finger occupies C18 to R79. The PHD-type zinc finger occupies T122–L170. The RING-type 2; degenerate zinc-finger motif lies at C125–V168. A compositionally biased stretch (polar residues) spans A305–P324. The tract at residues A305–S377 is disordered. Basic residues predominate over residues R346–I356. Over residues S359–S377 the composition is skewed to polar residues.

It localises to the cytoplasm. The protein localises to the nucleus. The sequence is that of PHD and RING finger domain-containing protein C126.07c from Schizosaccharomyces pombe (strain 972 / ATCC 24843) (Fission yeast).